The following is a 328-amino-acid chain: Pleckstrin homology domain protein OPY1 (328 aa).

Residues 19–52 are disordered; it reads NLIKKPSTSQNKTPTAQSSSGNNGAADGAPQGYH. The span at 24–41 shows a compositional bias: polar residues; that stretch reads PSTSQNKTPTAQSSSGNN. Positions 213 to 328 are required for targeting to the cell membrane; it reads AEHQVCSGIL…IRKKLKAENI (116 aa). The PH domain occupies 215–318; sequence HQVCSGILYT…WIINFKSGIL (104 aa).

In terms of assembly, interacts with MSS4 (via N-terminus); to negatively regulate MSS4 kinase activity.

Its subcellular location is the cell membrane. The protein resides in the cytoplasm. Its function is as follows. Binds phosphatidylinositol 4,5-bisphosphate (PtdIns(4,5)P2/PIP2) at the cell membrane. Negatively regulates the activity of phosphatidylinositol 4-phosphate 5-kinase MSS4. In Saccharomyces cerevisiae (strain ATCC 204508 / S288c) (Baker's yeast), this protein is Pleckstrin homology domain protein OPY1 (OPY1).